We begin with the raw amino-acid sequence, 547 residues long: Riboflavin transporter RibJ (547 aa).

Residues 1–11 are Cytoplasmic-facing; the sequence is MLPSFTRKPAD. A helical membrane pass occupies residues 12–32; the sequence is HPIGYLVALSGLLMQLMSYGI. At 33–58 the chain is on the extracellular side; that stretch reads DNSYSIFSEDMHNDPSLGFPSITAIS. The helical transmembrane segment at 59–79 threads the bilayer; sequence LGNSVSLGLSPAFGVLAGFCV. Over 80–85 the chain is Cytoplasmic; that stretch reads DRLPPR. The helical transmembrane segment at 86 to 106 threads the bilayer; sequence FMMALSTILLFTGLWISSTLA. The Extracellular segment spans residues 107–108; sequence AN. The helical transmembrane segment at 109-129 threads the bilayer; sequence IYVVTFTYCLFASIGTACMLS. Residues 130–144 lie on the Cytoplasmic side of the membrane; the sequence is PGAAATSSWFNRYQG. A helical membrane pass occupies residues 145 to 165; the sequence is LAMGINFAGGGIGSAIIPPLA. Topologically, residues 166-175 are extracellular; the sequence is GKWVVAYGWR. The helical transmembrane segment at 176–196 threads the bilayer; it reads KAFQLMSIFCAIGVLATALSA. Topologically, residues 197–344 are cytoplasmic; sequence RRREPKRDDS…MFTLPFMGNF (148 aa). The segment at 198-293 is disordered; the sequence is RREPKRDDSS…EGLDVTEQSQ (96 aa). Basic and acidic residues predominate over residues 244–255; the sequence is NEGKEDVREMGR. A helical membrane pass occupies residues 345-365; it reads LCWFIYSWAFYSLIYAAVPYI. The Extracellular segment spans residues 366–386; sequence SSMGKPGTVYAGVPPIPTDVA. Residues 387 to 407 traverse the membrane as a helical segment; the sequence is ATLFTFYGVFQVVGSVLVGWL. Residues 408–412 lie on the Cytoplasmic side of the membrane; it reads ASLVT. Residues 413–433 traverse the membrane as a helical segment; that stretch reads AEFAYVFCATVGGIGCGLLAL. Residues 434–437 lie on the Extracellular side of the membrane; sequence GRSY. Residues 438–458 traverse the membrane as a helical segment; the sequence is VAFALLLCIIGFCMAGMFAVM. At 459-470 the chain is on the cytoplasmic side; it reads PTLIATHLYGPN. A helical membrane pass occupies residues 471 to 491; it reads LGFYFGAVFLAGVVGGFVAPP. Residues 492-505 are Extracellular-facing; sequence MQATIQLRNNGSYA. A glycan (N-linked (GlcNAc...) asparagine) is linked at Asn-501. A helical transmembrane segment spans residues 506-526; that stretch reads FVCVVMSVSMTLSALVCYATL. The Cytoplasmic segment spans residues 527–547; it reads WRSKRSGIVLAARKTKLVEIM.

Belongs to the major facilitator superfamily. RibJ family.

Its subcellular location is the cell membrane. In terms of biological role, transporter involved in riboflavin (vitamin B2) uptake. Also transports FMN and FAD. In Trypanosoma brucei brucei (strain 927/4 GUTat10.1), this protein is Riboflavin transporter RibJ.